The sequence spans 112 residues: High mobility group protein D (112 aa).

A DNA-binding region (HMG box) is located at residues 5 to 71; that stretch reads PKRPLSAYML…DYDRAVKEFE (67 aa). Ser10 bears the Phosphoserine mark. Tyr12 carries the post-translational modification Phosphotyrosine. Residues 72–112 are disordered; the sequence is ANGGSSAANGGGAKKRAKPAKKVAKKSKKEESDEDDDDESE. Residues 84–98 show a composition bias toward basic residues; that stretch reads AKKRAKPAKKVAKKS. 2 positions are modified to phosphoserine: Ser103 and Ser111. Residues 103–112 show a composition bias toward acidic residues; it reads SDEDDDDESE.

Belongs to the HMGB family.

The protein localises to the nucleus. It is found in the chromosome. Binds preferentially single-stranded DNA and unwinds double-stranded DNA. Prefers sites containing the sequence 5'-ttg-3'. Facilitates DNA bending. Associated with early embryonic chromatin in the absence of histone H1. The protein is High mobility group protein D (HmgD) of Drosophila melanogaster (Fruit fly).